The following is a 103-amino-acid chain: NADH-quinone oxidoreductase subunit K (103 aa).

3 helical membrane passes run 7–27 (TEHG…GVLV), 31–51 (LIFM…AFIV), and 65–85 (FMLI…LILL).

It belongs to the complex I subunit 4L family. NDH-1 is composed of 14 different subunits. Subunits NuoA, H, J, K, L, M, N constitute the membrane sector of the complex.

The protein resides in the cell inner membrane. It carries out the reaction a quinone + NADH + 5 H(+)(in) = a quinol + NAD(+) + 4 H(+)(out). Its function is as follows. NDH-1 shuttles electrons from NADH, via FMN and iron-sulfur (Fe-S) centers, to quinones in the respiratory chain. The immediate electron acceptor for the enzyme in this species is believed to be ubiquinone. Couples the redox reaction to proton translocation (for every two electrons transferred, four hydrogen ions are translocated across the cytoplasmic membrane), and thus conserves the redox energy in a proton gradient. The sequence is that of NADH-quinone oxidoreductase subunit K from Nitrosococcus oceani (strain ATCC 19707 / BCRC 17464 / JCM 30415 / NCIMB 11848 / C-107).